Here is a 193-residue protein sequence, read N- to C-terminus: Secreted RxLR effector protein 126 (193 aa).

Residues 1–20 form the signal peptide; the sequence is MRYLLAVLIAAAFVISSGTS. A RxLR-dEER motif is present at residues 50-64; it reads RMLQTKAVNGLEEER.

It belongs to the RxLR effector family.

Its subcellular location is the secreted. The protein resides in the host membrane. In terms of biological role, secreted effector that completely suppresses the host cell death induced by cell death-inducing proteins. This Plasmopara viticola (Downy mildew of grapevine) protein is Secreted RxLR effector protein 126.